A 605-amino-acid polypeptide reads, in one-letter code: Insulin-like growth factor-binding protein complex acid labile subunit (605 aa).

The first 27 residues, 1–27, serve as a signal peptide directing secretion; the sequence is MALRKGGLALALLLLSWVALGPRSLEG. An LRRNT domain is found at 32 to 74; sequence TPGEAEGPACPATCACSYDDEVNELSVFCSSRNLTRLPDGIPG. Intrachain disulfides connect cysteine 41–cysteine 47 and cysteine 45–cysteine 60. N-linked (GlcNAc...) asparagine glycosylation is found at asparagine 64, asparagine 85, and asparagine 96. 19 LRR repeats span residues 75–96, 99–120, 123–144, 147–168, 171–192, 195–216, 219–240, 243–264, 267–288, 291–312, 315–336, 339–360, 363–384, 387–408, 411–432, 435–456, 459–480, 483–504, and 507–528; these read GTQALWLDSNNLSSIPPAAFRN, SLAFLNLQGGQLGSLEPQALLG, NLCHLHLERNQLRSLAVGTFAY, ALALLGLSNNRLSRLEDGLFEG, NLWDLNLGWNSLAVLPDAAFRG, GLRELVLAGNRLAYLQPALFSG, ELRELDLSRNALRAIKANVFAQ, RLQKLYLDRNLIAAVAPGAFLG, ALRWLDLSHNRVAGLLEDTFPG, GLRVLRLSHNAIASLRPRTFED, FLEELQLGHNRIRQLAERSFEG, QLEVLTLDHNQLQEVKVGAFLG, NVAVMNLSGNCLRNLPEQVFRG, KLHSLHLEGSCLGRIRPHTFAG, GLRRLFLKDNGLVGIEEQSLWG, ELLELDLTSNQLTHLPHQLFQG, KLEYLLLSHNRLAELPADALGP, RAFWLDVSHNRLEALPGSLLAS, and RLRYLNLRNNSLRTFTPQPPGL. Asparagine 368 carries N-linked (GlcNAc...) asparagine glycosylation. Asparagine 515 carries an N-linked (GlcNAc...) asparagine glycan. In terms of domain architecture, LRRCT spans 536–605; it reads NPWDCSCPLK…DLGEAHFAPC (70 aa). Disulfide bonds link cysteine 540–cysteine 583, cysteine 542–cysteine 605, and cysteine 566–cysteine 571. Asparagine 580 carries an N-linked (GlcNAc...) asparagine glycan.

Forms a ternary complex with IGF1 and IGFBP3.

The protein localises to the secreted. It is found in the extracellular space. Its function is as follows. Involved in protein-protein interactions that result in protein complexes, receptor-ligand binding or cell adhesion. In Papio hamadryas (Hamadryas baboon), this protein is Insulin-like growth factor-binding protein complex acid labile subunit (IGFALS).